Consider the following 577-residue polypeptide: Proline--tRNA ligase (577 aa).

Belongs to the class-II aminoacyl-tRNA synthetase family. ProS type 1 subfamily. As to quaternary structure, homodimer.

The protein localises to the cytoplasm. The catalysed reaction is tRNA(Pro) + L-proline + ATP = L-prolyl-tRNA(Pro) + AMP + diphosphate. Functionally, catalyzes the attachment of proline to tRNA(Pro) in a two-step reaction: proline is first activated by ATP to form Pro-AMP and then transferred to the acceptor end of tRNA(Pro). As ProRS can inadvertently accommodate and process non-cognate amino acids such as alanine and cysteine, to avoid such errors it has two additional distinct editing activities against alanine. One activity is designated as 'pretransfer' editing and involves the tRNA(Pro)-independent hydrolysis of activated Ala-AMP. The other activity is designated 'posttransfer' editing and involves deacylation of mischarged Ala-tRNA(Pro). The misacylated Cys-tRNA(Pro) is not edited by ProRS. In Janthinobacterium sp. (strain Marseille) (Minibacterium massiliensis), this protein is Proline--tRNA ligase.